We begin with the raw amino-acid sequence, 188 residues long: Adenine phosphoribosyltransferase (188 aa).

The protein belongs to the purine/pyrimidine phosphoribosyltransferase family. Homodimer.

Its subcellular location is the cytoplasm. It catalyses the reaction AMP + diphosphate = 5-phospho-alpha-D-ribose 1-diphosphate + adenine. It participates in purine metabolism; AMP biosynthesis via salvage pathway; AMP from adenine: step 1/1. Functionally, catalyzes a salvage reaction resulting in the formation of AMP, that is energically less costly than de novo synthesis. In Neisseria meningitidis serogroup A / serotype 4A (strain DSM 15465 / Z2491), this protein is Adenine phosphoribosyltransferase.